Consider the following 419-residue polypeptide: Inner ear-specific collagen (419 aa).

Positions 1 to 19 (MDAYSLSPTDSTTYSSDTF) are cleaved as a signal peptide. The tract at residues 20 to 57 (STEFHTDAIAPPGNTPGNYTLDYNECFFNFCECCPPEK) is nonhelical region (NC2). Asparagine 37 is a glycosylation site (N-linked (GlcNAc...) asparagine). Residues 58–274 (GPMGPMGERG…RGPKGPPGES (217 aa)) form a triple-helical region (COL1) region. The segment at 63 to 275 (MGERGLPGPP…GPKGPPGESV (213 aa)) is disordered. Basic and acidic residues-rich tracts occupy residues 129 to 144 (PGEKGDPGLKGDKGER) and 184 to 202 (LKGEQGLKGECLQGEKGER). Residues 227-236 (GPLGGKGDTG) are compositionally biased toward gly residues. A C1q domain is found at 275–412 (VEQIRSAFSV…GFLLYPDTKK (138 aa)). The interval 275-419 (VEQIRSAFSV…TKKPTAMENL (145 aa)) is nonhelical region (NC1). Asparagine 320 is a glycosylation site (N-linked (GlcNAc...) asparagine).

As to expression, specialized secretory supporting cells at the outer perimeter of the saccular epithelium.

Its subcellular location is the secreted. It localises to the extracellular space. The protein resides in the extracellular matrix. Its function is as follows. Forms a microstructural matrix within the otolithic membrane. This is Inner ear-specific collagen from Lepomis macrochirus (Bluegill).